A 162-amino-acid polypeptide reads, in one-letter code: Endoribonuclease YbeY (162 aa).

The Zn(2+) site is built by histidine 118, histidine 122, and histidine 128.

Belongs to the endoribonuclease YbeY family. Zn(2+) serves as cofactor.

It is found in the cytoplasm. Its function is as follows. Single strand-specific metallo-endoribonuclease involved in late-stage 70S ribosome quality control and in maturation of the 3' terminus of the 16S rRNA. The sequence is that of Endoribonuclease YbeY from Caulobacter sp. (strain K31).